A 730-amino-acid chain; its full sequence is Translation factor GUF1 homolog, mitochondrial (730 aa).

Positions 106–289 (ELIRNFCIIA…AVVVSIPPPK (184 aa)) constitute a tr-type G domain. GTP contacts are provided by residues 115 to 122 (AHVDHGKS), 182 to 186 (DTPGH), and 236 to 239 (NKID).

The protein belongs to the TRAFAC class translation factor GTPase superfamily. Classic translation factor GTPase family. LepA subfamily.

It is found in the mitochondrion inner membrane. The enzyme catalyses GTP + H2O = GDP + phosphate + H(+). Its function is as follows. Promotes mitochondrial protein synthesis. May act as a fidelity factor of the translation reaction, by catalyzing a one-codon backward translocation of tRNAs on improperly translocated ribosomes. Binds to mitochondrial ribosomes in a GTP-dependent manner. The sequence is that of Translation factor GUF1 homolog, mitochondrial from Theileria annulata.